The primary structure comprises 353 residues: Mas-related G-protein coupled receptor member B5 (353 aa).

Over 1 to 67 (MPDSPTESYG…SCIITFNTLN (67 aa)) the chain is Extracellular. N-linked (GlcNAc...) asparagine glycosylation is found at Asn-26 and Asn-44. Residues 68–90 (FLTATISVVGTAGNATVLRLLGF) form a helical membrane-spanning segment. The Cytoplasmic portion of the chain corresponds to 91–96 (HMHRYA). A helical transmembrane segment spans residues 97 to 117 (FSVYVFNLAGADFLYLCTQTV). Topologically, residues 118-131 (YSLECVLQFDNSYF) are extracellular. Residues 132 to 152 (YFLLTILMFAYLAALCMIPAI) form a helical membrane-spanning segment. At 153-180 (STERCLSVTWPIWYHCQRPRHTSATVCA) the chain is on the cytoplasmic side. The helical transmembrane segment at 181–201 (LFWAFSLLLRLLLGQGCGFLF) threads the bilayer. The Extracellular portion of the chain corresponds to 202–213 (GKYDYYFCRYCS). The chain crosses the membrane as a helical span at residues 214–234 (FITTAFLIVLFVVPFVSSLAM). Residues 235–253 (LTKIICGSHRIPVTRFYVT) lie on the Cytoplasmic side of the membrane. The chain crosses the membrane as a helical span at residues 254 to 274 (IAVTVLVFTFFGLPVGIISLL). Over 275–289 (LPRIVVFRGVFYIYK) the chain is Extracellular. Residues 290-310 (IVTFLYSVNCCANPIIYFLIG) traverse the membrane as a helical segment. At 311 to 353 (SIRHHRLQRQSLKLLLQRAMQDTPEEEGGVKGPSQKSNELEIV) the chain is on the cytoplasmic side. A disordered region spans residues 333–353 (TPEEEGGVKGPSQKSNELEIV).

This sequence belongs to the G-protein coupled receptor 1 family. Mas subfamily. In terms of tissue distribution, expressed strongly in newborn dorsal root ganglia, adult dorsal root ganglia and trigeminal ganlia.

It is found in the membrane. Its function is as follows. Orphan receptor. Probably involved in the function of nociceptive neurons. May regulate nociceptor function and/or development, including the sensation or modulation of pain. The sequence is that of Mas-related G-protein coupled receptor member B5 (Mrgprb5) from Rattus norvegicus (Rat).